The sequence spans 157 residues: Probable succinate transporter subunit YjjB (157 aa).

The next 4 membrane-spanning stretches (helical) occupy residues 8–28, 50–70, 87–107, and 129–149; these read FALA…AMVF, MILM…SMLV, VFTV…TAMI, and FLTA…PGLW.

This sequence belongs to the ThrE exporter (TC 2.A.79) family. As to quaternary structure, the transporter is composed of YjjB and YjjP.

The protein localises to the cell inner membrane. Functionally, involved in succinate export with YjjP. Both proteins are required for export. This chain is Probable succinate transporter subunit YjjB, found in Escherichia coli (strain SE11).